The following is a 122-amino-acid chain: Small ribosomal subunit protein uS12c (122 aa).

The protein belongs to the universal ribosomal protein uS12 family. As to quaternary structure, part of the 30S ribosomal subunit.

It localises to the plastid. Its subcellular location is the chloroplast. In terms of biological role, with S4 and S5 plays an important role in translational accuracy. Located at the interface of the 30S and 50S subunits. The sequence is that of Small ribosomal subunit protein uS12c (rps12) from Illicium oligandrum (Star anise).